The chain runs to 189 residues: Chitin synthase 2 (189 aa).

Belongs to the chitin synthase family. Class II subfamily.

The protein resides in the cell membrane. The enzyme catalyses [(1-&gt;4)-N-acetyl-beta-D-glucosaminyl](n) + UDP-N-acetyl-alpha-D-glucosamine = [(1-&gt;4)-N-acetyl-beta-D-glucosaminyl](n+1) + UDP + H(+). In terms of biological role, polymerizes chitin, a structural polymer of the cell wall and septum, by transferring the sugar moiety of UDP-GlcNAc to the non-reducing end of the growing chitin polymer. This chain is Chitin synthase 2 (chs2), found in Aspergillus niger.